A 211-amino-acid chain; its full sequence is UPF0329 protein ECU07_1880/ECU10_0020 (211 aa).

The protein belongs to the UPF0329 family.

The polypeptide is UPF0329 protein ECU07_1880/ECU10_0020 (Encephalitozoon cuniculi (strain GB-M1) (Microsporidian parasite)).